The primary structure comprises 513 residues: GMP synthase [glutamine-hydrolyzing] (513 aa).

One can recognise a Glutamine amidotransferase type-1 domain in the interval 8 to 198 (MILVLDFGSQ…VFGVCDCDGK (191 aa)). Catalysis depends on Cys-85, which acts as the Nucleophile. Residues His-172 and Glu-174 contribute to the active site. In terms of domain architecture, GMPS ATP-PPase spans 199 to 388 (WSMENFIEIE…LGIPDDIVWR (190 aa)). 226–232 (SGGVDSS) lines the ATP pocket.

Homodimer.

The catalysed reaction is XMP + L-glutamine + ATP + H2O = GMP + L-glutamate + AMP + diphosphate + 2 H(+). Its pathway is purine metabolism; GMP biosynthesis; GMP from XMP (L-Gln route): step 1/1. In terms of biological role, catalyzes the synthesis of GMP from XMP. The chain is GMP synthase [glutamine-hydrolyzing] from Bacillus pumilus (strain SAFR-032).